Reading from the N-terminus, the 530-residue chain is T-box transcription factor TBX21 (530 aa).

Residues M1–T55 are disordered. Residue S52 is modified to Phosphoserine. T55 is subject to Phosphothreonine. Y76 and Y117 each carry phosphotyrosine. The segment at residues L140–E325 is a DNA-binding region (T-box). Y219 carries the post-translational modification Phosphotyrosine; by ABL1. S224 carries the post-translational modification Phosphoserine. The residue at position 265 (Y265) is a Phosphotyrosine; by ABL1. Position 302 is a phosphothreonine (T302). A Phosphotyrosine; by ABL1 modification is found at Y304. K313 is covalently cross-linked (Glycyl lysine isopeptide (Lys-Gly) (interchain with G-Cter in ubiquitin)). Positions A444 to N530 are disordered. Residues S462–P482 are compositionally biased toward polar residues. Residues S498–P515 are compositionally biased toward low complexity. A Phosphoserine modification is found at S508. At Y525 the chain carries Phosphotyrosine; by ITK.

Interacts with RUNX1 and RUNX3. Interacts with ITK. The phosphorylated form (at Tyr-525) interacts with GATA3. Interacts with ABL1. Interacts with RELA. The phosphorylated form (at Thr-302) interacts with NFATC2. Interacts with KDM6B. Interacts with SMARCA4 in a KDM6B-dependent manner. Interacts with CCTN1 and CDK9. Interacts with USP10. In terms of processing, phosphorylations at Ser-52, Tyr-76, Ser-224 and Ser-508 are regulated by mTORC1. Phosphorylation at Tyr-525 is essential for its interaction GATA3. Phosphorylation at Tyr-219, Tyr-265 and Tyr-304 enhances its transcriptional activator activity. Phosphorylation at Thr-302 is required for its interaction with NFATC2. Post-translationally, ubiquitinated at Lys-313, leading to its degradation by the proteasome. Ubiquitination is essential for controlling protein stability, binding to the T-box-binding element of the IFN-gamma promoter, and for interaction with NFATC2 through induction of phosphorylation at Thr-302. Deubiquitinated by USP10 leading to its stabilization. T-cell specific. Expressed in regulatory T (TReg) cells.

The protein resides in the nucleus. In terms of biological role, lineage-defining transcription factor which initiates Th1 lineage development from naive Th precursor cells both by activating Th1 genetic programs and by repressing the opposing Th2 and Th17 genetic programs. Activates transcription of a set of genes important for Th1 cell function, including those encoding IFN-gamma and the chemokine receptor CXCR3. Activates IFNG and CXCR3 genes in part by recruiting chromatin remodeling complexes including KDM6B, a SMARCA4-containing SWI/SNF-complex, and an H3K4me2-methyltransferase complex to their promoters and all of these complexes serve to establish a more permissive chromatin state conducive with transcriptional activation. Can activate Th1 genes also via recruitment of Mediator complex and P-TEFb (composed of CDK9 and CCNT1/cyclin-T1) in the form of the super elongation complex (SEC) to super-enhancers and associated genes in activated Th1 cells. Inhibits the Th17 cell lineage commitment by blocking RUNX1-mediated transactivation of Th17 cell-specific transcriptinal regulator RORC. Inhibits the Th2 cell lineage commitment by suppressing the production of Th2 cytokines, such as IL-4, IL-5, and IL- 13, via repression of transcriptional regulators GATA3 and NFATC2. Protects Th1 cells from amplifying aberrant type-I IFN response in an IFN-gamma abundant microenvironment by acting as a repressor of type-I IFN transcription factors and type-I IFN- stimulated genes. Acts as a regulator of antiviral B-cell responses; controls chronic viral infection by promoting the antiviral antibody IgG2a isotype switching and via regulation of a broad antiviral gene expression program. The chain is T-box transcription factor TBX21 (Tbx21) from Mus musculus (Mouse).